The sequence spans 126 residues: UPF0538 protein C2orf76 homolog (126 aa).

This sequence belongs to the UPF0538 family.

The sequence is that of UPF0538 protein C2orf76 homolog from Xenopus tropicalis (Western clawed frog).